Consider the following 192-residue polypeptide: 7-methyl-GTP pyrophosphatase (192 aa).

Asp-69 functions as the Proton acceptor in the catalytic mechanism.

The protein belongs to the Maf family. YceF subfamily. A divalent metal cation serves as cofactor.

The protein localises to the cytoplasm. The enzyme catalyses N(7)-methyl-GTP + H2O = N(7)-methyl-GMP + diphosphate + H(+). In terms of biological role, nucleoside triphosphate pyrophosphatase that hydrolyzes 7-methyl-GTP (m(7)GTP). May have a dual role in cell division arrest and in preventing the incorporation of modified nucleotides into cellular nucleic acids. In Pseudomonas syringae pv. syringae (strain B728a), this protein is 7-methyl-GTP pyrophosphatase.